The following is a 100-amino-acid chain: Large ribosomal subunit protein bL21 (100 aa).

The protein belongs to the bacterial ribosomal protein bL21 family. As to quaternary structure, part of the 50S ribosomal subunit. Contacts protein L20.

Functionally, this protein binds to 23S rRNA in the presence of protein L20. The polypeptide is Large ribosomal subunit protein bL21 (Wolbachia sp. subsp. Brugia malayi (strain TRS)).